Reading from the N-terminus, the 185-residue chain is ATP synthase subunit b 2 (185 aa).

The interval 1-23 is disordered; it reads MAEGHGDAKGATAHTAADGGHKA. Low complexity predominate over residues 9–18; the sequence is KGATAHTAAD. Residues 37 to 57 traverse the membrane as a helical segment; sequence LVSLTIAFVALYLIVSKIILP.

This sequence belongs to the ATPase B chain family. In terms of assembly, F-type ATPases have 2 components, F(1) - the catalytic core - and F(0) - the membrane proton channel. F(1) has five subunits: alpha(3), beta(3), gamma(1), delta(1), epsilon(1). F(0) has three main subunits: a(1), b(2) and c(10-14). The alpha and beta chains form an alternating ring which encloses part of the gamma chain. F(1) is attached to F(0) by a central stalk formed by the gamma and epsilon chains, while a peripheral stalk is formed by the delta and b chains.

It localises to the cell inner membrane. Its function is as follows. F(1)F(0) ATP synthase produces ATP from ADP in the presence of a proton or sodium gradient. F-type ATPases consist of two structural domains, F(1) containing the extramembraneous catalytic core and F(0) containing the membrane proton channel, linked together by a central stalk and a peripheral stalk. During catalysis, ATP synthesis in the catalytic domain of F(1) is coupled via a rotary mechanism of the central stalk subunits to proton translocation. Component of the F(0) channel, it forms part of the peripheral stalk, linking F(1) to F(0). The b'-subunit is a diverged and duplicated form of b found in plants and photosynthetic bacteria. This chain is ATP synthase subunit b 2 (atpF2), found in Rhodopseudomonas palustris (strain BisB5).